We begin with the raw amino-acid sequence, 288 residues long: Fructokinase (288 aa).

Residue T131 participates in ATP binding. Zn(2+) contacts are provided by H154, C169, H172, and C175. Residues P183 and 231–235 (GVMNQ) each bind ATP.

Belongs to the ROK (NagC/XylR) family. Requires Mg(2+) as cofactor.

The enzyme catalyses D-fructose + ATP = D-fructose 6-phosphate + ADP + H(+). With respect to regulation, inhibition by zinc ions. This chain is Fructokinase (scrK), found in Pediococcus pentosaceus.